Here is a 308-residue protein sequence, read N- to C-terminus: Glutamyl-Q tRNA(Asp) synthetase (308 aa).

Residues 19 to 23 and E55 each bind L-glutamate; that span reads RFAPS. The 'HIGH' region signature appears at 22–32; the sequence is PSPSGELHFGS. Zn(2+)-binding residues include C111, C113, Y125, and C129. L-glutamate contacts are provided by Y182 and R200. A 'KMSKS' region motif is present at residues 238–242; it reads KLSKQ. K241 provides a ligand contact to ATP.

The protein belongs to the class-I aminoacyl-tRNA synthetase family. GluQ subfamily. Zn(2+) is required as a cofactor.

Its function is as follows. Catalyzes the tRNA-independent activation of glutamate in presence of ATP and the subsequent transfer of glutamate onto a tRNA(Asp). Glutamate is transferred on the 2-amino-5-(4,5-dihydroxy-2-cyclopenten-1-yl) moiety of the queuosine in the wobble position of the QUC anticodon. The chain is Glutamyl-Q tRNA(Asp) synthetase from Escherichia coli O157:H7.